Here is a 199-residue protein sequence, read N- to C-terminus: NAD(P)H dehydrogenase (quinone) (199 aa).

The Flavodoxin-like domain maps to 4–190 (VLVLYYSAYG…AGARYQGKTI (187 aa)). FMN-binding positions include 10 to 15 (SAYGHI) and 78 to 80 (TRF). An NAD(+)-binding site is contributed by Tyr12. Position 98 (Trp98) interacts with substrate. FMN contacts are provided by residues 113 to 119 (STATQHG) and His134.

The protein belongs to the WrbA family. FMN serves as cofactor.

The enzyme catalyses a quinone + NADH + H(+) = a quinol + NAD(+). It carries out the reaction a quinone + NADPH + H(+) = a quinol + NADP(+). The polypeptide is NAD(P)H dehydrogenase (quinone) (Rhodopseudomonas palustris (strain BisB5)).